Consider the following 80-residue polypeptide: Large ribosomal subunit protein bL31B (80 aa).

This sequence belongs to the bacterial ribosomal protein bL31 family. Type B subfamily. As to quaternary structure, part of the 50S ribosomal subunit.

In Xylella fastidiosa (strain M23), this protein is Large ribosomal subunit protein bL31B.